Here is a 205-residue protein sequence, read N- to C-terminus: Probable GTP-binding protein EngB (205 aa).

The region spanning 27-201 (TGIEIAFAGR…AVKLDFWFSP (175 aa)) is the EngB-type G domain. Residues 35–42 (GRSNAGKS), 62–66 (GRTQL), 80–83 (DLPG), 147–150 (TKAD), and 180–182 (FSA) contribute to the GTP site. The Mg(2+) site is built by Ser42 and Thr64.

The protein belongs to the TRAFAC class TrmE-Era-EngA-EngB-Septin-like GTPase superfamily. EngB GTPase family. Requires Mg(2+) as cofactor.

Its function is as follows. Necessary for normal cell division and for the maintenance of normal septation. This chain is Probable GTP-binding protein EngB, found in Haemophilus influenzae (strain PittGG).